A 200-amino-acid polypeptide reads, in one-letter code: ATP synthase subunit s, mitochondrial (200 aa).

A mitochondrion-targeting transit peptide spans 1–25 (MMLFGKISQQLCGVKKLPWSCDSRY). The N-terminal domain stretch occupies residues 1–61 (MMLFGKISQQ…SEWLLRCGAM (61 aa)). G59 lines the Mg(2+) pocket. LRR repeat units lie at residues 62–87 (VRYH…KYKI), 88–116 (QAID…KIRL), 117–141 (CKCH…KTIL), and 142–173 (EMEI…LSDL). T93 contacts Mg(2+).

It belongs to the ATP synthase subunit s family. In terms of assembly, homotetramer. Associates with ATP synthase.

The protein resides in the mitochondrion. Its subcellular location is the mitochondrion inner membrane. Involved in regulation of mitochondrial membrane ATP synthase. Necessary for H(+) conduction of ATP synthase. Facilitates energy-driven catalysis of ATP synthesis by blocking a proton leak through an alternative proton exit pathway. This Pongo abelii (Sumatran orangutan) protein is ATP synthase subunit s, mitochondrial (DMAC2L).